Reading from the N-terminus, the 387-residue chain is DNA double-strand break repair protein Mre11 (387 aa).

Mn(2+) contacts are provided by D9, H11, D50, and N85. The active-site Proton donor is the H86. The Mn(2+) site is built by H150, D181, and H183. Residues 365–387 are disordered; sequence AVLDDDADAADDDGRPTTVEEFQ. The segment covering 366–375 has biased composition (acidic residues); that stretch reads VLDDDADAAD.

It belongs to the MRE11/RAD32 family. In terms of assembly, homodimer. Forms a heterotetramer composed of two Mre11 subunits and two Rad50 subunits. Requires Mn(2+) as cofactor.

With respect to regulation, nuclease activity is regulated by Rad50. Its function is as follows. Part of the Rad50/Mre11 complex, which is involved in the early steps of DNA double-strand break (DSB) repair. Mre11 binds to DSB ends and has both double-stranded 3'-5' exonuclease activity and single-stranded endonuclease activity. The sequence is that of DNA double-strand break repair protein Mre11 from Halobacterium salinarum (strain ATCC 700922 / JCM 11081 / NRC-1) (Halobacterium halobium).